We begin with the raw amino-acid sequence, 133 residues long: uncharacterized protein (133 aa).

Helical transmembrane passes span 13–33 and 73–93; these read FLLS…LFLS and FGNP…LLLL.

Its subcellular location is the membrane. This is an uncharacterized protein from Saccharomyces cerevisiae (strain ATCC 204508 / S288c) (Baker's yeast).